Reading from the N-terminus, the 177-residue chain is Bifunctional protein PyrR (177 aa).

The PRPP-binding motif lies at 99 to 111; that stretch reads VILVDDVIYKGRT.

Belongs to the purine/pyrimidine phosphoribosyltransferase family. PyrR subfamily.

The catalysed reaction is UMP + diphosphate = 5-phospho-alpha-D-ribose 1-diphosphate + uracil. Its function is as follows. Regulates the transcription of the pyrimidine nucleotide (pyr) operon in response to exogenous pyrimidines. In terms of biological role, also displays a weak uracil phosphoribosyltransferase activity which is not physiologically significant. The sequence is that of Bifunctional protein PyrR from Microcystis aeruginosa (strain NIES-843 / IAM M-2473).